The sequence spans 203 residues: A-type ATP synthase subunit E (203 aa).

Belongs to the V-ATPase E subunit family. In terms of assembly, might form a homodimer. Interacts with subunit H via residues 41-60. The A-type ATPase is composed of subunits A(3), B(3), C, D, E(1 or 2), F, H(2), I and K(x).

Its subcellular location is the cell membrane. Component of the A-type ATP synthase that produces ATP from ADP in the presence of a proton gradient across the membrane. This is A-type ATP synthase subunit E from Methanocaldococcus jannaschii (strain ATCC 43067 / DSM 2661 / JAL-1 / JCM 10045 / NBRC 100440) (Methanococcus jannaschii).